We begin with the raw amino-acid sequence, 197 residues long: Large ribosomal subunit protein eL15 (197 aa).

Residues 175–197 (LRTGRKGSSKSRPSIRANGRLRR) are disordered.

It belongs to the eukaryotic ribosomal protein eL15 family.

The protein is Large ribosomal subunit protein eL15 (rpl15e) of Thermoplasma volcanium (strain ATCC 51530 / DSM 4299 / JCM 9571 / NBRC 15438 / GSS1).